Consider the following 585-residue polypeptide: A-type ATP synthase subunit A (585 aa).

231–238 (GPFGSGKT) is a binding site for ATP.

It belongs to the ATPase alpha/beta chains family. In terms of assembly, has multiple subunits with at least A(3), B(3), C, D, E, F, H, I and proteolipid K(x).

Its subcellular location is the cell membrane. The enzyme catalyses ATP + H2O + 4 H(+)(in) = ADP + phosphate + 5 H(+)(out). Functionally, produces ATP from ADP in the presence of a proton gradient across the membrane. The archaeal alpha chain is a catalytic subunit. Its function is as follows. Component of the A-type ATP synthase that produces ATP from ADP in the presence of a proton gradient across the membrane. The A chain is the catalytic subunit. In Thermococcus kodakarensis (strain ATCC BAA-918 / JCM 12380 / KOD1) (Pyrococcus kodakaraensis (strain KOD1)), this protein is A-type ATP synthase subunit A.